Here is a 39-residue protein sequence, read N- to C-terminus: Bacteriocin SRCAM 602 (39 aa).

Belongs to the bacteriocin class IIA/YGNGV family.

It is found in the secreted. Its function is as follows. Bacteriocin with antibacterial activity against C.jejuni. The polypeptide is Bacteriocin SRCAM 602 (Paenibacillus polymyxa (Bacillus polymyxa)).